A 207-amino-acid polypeptide reads, in one-letter code: Ribonuclease HII (207 aa).

The RNase H type-2 domain occupies 17–207 (RIVAGVDEVG…SFKPLAAFVD (191 aa)). The a divalent metal cation site is built by Asp-23, Glu-24, and Asp-120.

The protein belongs to the RNase HII family. Mn(2+) is required as a cofactor. Requires Mg(2+) as cofactor.

It localises to the cytoplasm. It catalyses the reaction Endonucleolytic cleavage to 5'-phosphomonoester.. Its function is as follows. Endonuclease that specifically degrades the RNA of RNA-DNA hybrids. The polypeptide is Ribonuclease HII (Herpetosiphon aurantiacus (strain ATCC 23779 / DSM 785 / 114-95)).